The chain runs to 603 residues: Baeyer-Villiger monooxygenase (603 aa).

FAD contacts are provided by residues Glu94, 102–105 (TWYW), Asp114, Tyr120, and Val164. 112 to 114 (HCD) contributes to the NADP(+) binding site. Residues 248-254 (TGATGVQ), 271-272 (RT), and 386-387 (KR) contribute to the NADP(+) site.

The protein belongs to the FAD-binding monooxygenase family. The cofactor is FAD.

In terms of biological role, catalyzes a Baeyer-Villiger oxidation reaction, i.e. the insertion of an oxygen atom into a carbon-carbon bond adjacent to a carbonyl, which converts ketones to esters or lactones using NADPH and/or NADH as an electron donor. Thus, can convert bicyclo[3.2.0]hept-2-en-6-one into the oxidative lactone products 2-oxabicyclo[3.3.0]oct-6-en-3-one and 3-oxabicyclo[3.3.0]oct-6-en-2-one. Is also able to catalyze the sulfoxidation of methyl phenyl sulfide (thioanisole). The polypeptide is Baeyer-Villiger monooxygenase (Streptomyces coelicolor (strain ATCC BAA-471 / A3(2) / M145)).